The sequence spans 249 residues: Capsid protein (249 aa).

Residues 1–33 (MDTDGDNDVFGSGNDTRNNDDKKKEEMKQNISD) form a disordered region. Residues 17-28 (RNNDDKKKEEMK) show a composition bias toward basic and acidic residues.

The protein belongs to the closteroviridae capsid protein family.

The protein resides in the virion. Its function is as follows. Capsid protein self-assembles to form filamentous capsids, about 650-850 nm in length. The chain is Capsid protein from Beta vulgaris (Sugar beet).